A 513-amino-acid polypeptide reads, in one-letter code: Histidine ammonia-lyase (513 aa).

The segment at residues 144–146 is a cross-link (5-imidazolinone (Ala-Gly)); sequence ASG. Position 145 is a 2,3-didehydroalanine (Ser) (Ser145).

It belongs to the PAL/histidase family. In terms of processing, contains an active site 4-methylidene-imidazol-5-one (MIO), which is formed autocatalytically by cyclization and dehydration of residues Ala-Ser-Gly.

It localises to the cytoplasm. The enzyme catalyses L-histidine = trans-urocanate + NH4(+). It functions in the pathway amino-acid degradation; L-histidine degradation into L-glutamate; N-formimidoyl-L-glutamate from L-histidine: step 1/3. The protein is Histidine ammonia-lyase of Streptococcus sanguinis (strain SK36).